A 556-amino-acid chain; its full sequence is 2-methylpropanoate--CoA ligase CCL4 (556 aa).

Residues 192–200 (TSGTTSSPK), 325–330 (HGYGLT), aspartate 423, 435–438 (IKDR), and lysine 531 contribute to the ATP site. The tract at residues 260 to 325 (DSEIIYDMIK…TESLGFAVSH (66 aa)) is SBD1. The interval 326–402 (GYGLTETAGL…LRGGSVMLGY (77 aa)) is SBD2.

Belongs to the ATP-dependent AMP-binding enzyme family. As to expression, mostly expressed in old leaves and in cones and glandular trichomes (lupulin glands) after flowering, and, to a lower extent, in stems, young leaves and flowers.

The protein resides in the cytoplasm. Its subcellular location is the cytosol. The enzyme catalyses 2-methylpropanoate + ATP + CoA = 2-methylpropanoyl-CoA + AMP + diphosphate. It carries out the reaction propanoate + ATP + CoA = propanoyl-CoA + AMP + diphosphate. It catalyses the reaction butanoate + ATP + CoA = butanoyl-CoA + AMP + diphosphate. The catalysed reaction is 2-methylbutanoate + ATP + CoA = 2-methylbutanoyl-CoA + AMP + diphosphate. It participates in secondary metabolite biosynthesis. Its function is as follows. Involved in the biosynthesis of prenylated phenolics natural products which contribute to the bitter taste of beer and display broad biological activities. Catalyzes the ligation of CoA on 2-methylpropanoate (isobutyric acid) and 2-methylbutanoate to produce 2-methylpropanoyl-CoA and 2-methylbutanoyl-CoA, respectively. Can also use propanoate and butanoate as substrates with a lower efficiency. The chain is 2-methylpropanoate--CoA ligase CCL4 from Humulus lupulus (European hop).